The following is a 254-amino-acid chain: Phosphoribosylaminoimidazole-succinocarboxamide synthase (254 aa).

The protein belongs to the SAICAR synthetase family.

The enzyme catalyses 5-amino-1-(5-phospho-D-ribosyl)imidazole-4-carboxylate + L-aspartate + ATP = (2S)-2-[5-amino-1-(5-phospho-beta-D-ribosyl)imidazole-4-carboxamido]succinate + ADP + phosphate + 2 H(+). Its pathway is purine metabolism; IMP biosynthesis via de novo pathway; 5-amino-1-(5-phospho-D-ribosyl)imidazole-4-carboxamide from 5-amino-1-(5-phospho-D-ribosyl)imidazole-4-carboxylate: step 1/2. This Gluconacetobacter diazotrophicus (strain ATCC 49037 / DSM 5601 / CCUG 37298 / CIP 103539 / LMG 7603 / PAl5) protein is Phosphoribosylaminoimidazole-succinocarboxamide synthase.